The chain runs to 78 residues: Large ribosomal subunit protein bL28 (78 aa).

A disordered region spans residues methionine 1 to asparagine 22. The span at arginine 11–asparagine 22 shows a compositional bias: polar residues.

It belongs to the bacterial ribosomal protein bL28 family.

This is Large ribosomal subunit protein bL28 from Alkalilimnicola ehrlichii (strain ATCC BAA-1101 / DSM 17681 / MLHE-1).